Reading from the N-terminus, the 885-residue chain is Translation initiation factor IF-2 (885 aa).

Positions E123–I232 are enriched in basic and acidic residues. Residues E123–M289 are disordered. Over residues G253–R266 the composition is skewed to basic residues. Residues G267 to E276 show a composition bias toward basic and acidic residues. In terms of domain architecture, tr-type G spans P385 to K554. The tract at residues G394–T401 is G1. Position 394–401 (G394–T401) interacts with GTP. The interval G419–H423 is G2. Residues D440–G443 are G3. GTP is bound by residues D440–H444 and N494–D497. Residues N494–D497 are G4. The G5 stretch occupies residues S530 to K532.

It belongs to the TRAFAC class translation factor GTPase superfamily. Classic translation factor GTPase family. IF-2 subfamily.

The protein localises to the cytoplasm. Its function is as follows. One of the essential components for the initiation of protein synthesis. Protects formylmethionyl-tRNA from spontaneous hydrolysis and promotes its binding to the 30S ribosomal subunits. Also involved in the hydrolysis of GTP during the formation of the 70S ribosomal complex. This chain is Translation initiation factor IF-2, found in Shewanella oneidensis (strain ATCC 700550 / JCM 31522 / CIP 106686 / LMG 19005 / NCIMB 14063 / MR-1).